Consider the following 475-residue polypeptide: Sulfate adenylyltransferase subunit 1 (475 aa).

A tr-type G domain is found at 25-239 (KSLLRFLTCG…EVLETVEIQR (215 aa)). Residues 34–41 (GSVDDGKS) are G1. Position 34–41 (34–41 (GSVDDGKS)) interacts with GTP. The tract at residues 92-96 (GITID) is G2. The segment at 113-116 (DTPG) is G3. Residues 113–117 (DTPGH) and 168–171 (NKMD) contribute to the GTP site. A G4 region spans residues 168–171 (NKMD). The tract at residues 206 to 208 (SAL) is G5.

This sequence belongs to the TRAFAC class translation factor GTPase superfamily. Classic translation factor GTPase family. CysN/NodQ subfamily. As to quaternary structure, heterodimer composed of CysD, the smaller subunit, and CysN.

The catalysed reaction is sulfate + ATP + H(+) = adenosine 5'-phosphosulfate + diphosphate. It functions in the pathway sulfur metabolism; hydrogen sulfide biosynthesis; sulfite from sulfate: step 1/3. Its function is as follows. With CysD forms the ATP sulfurylase (ATPS) that catalyzes the adenylation of sulfate producing adenosine 5'-phosphosulfate (APS) and diphosphate, the first enzymatic step in sulfur assimilation pathway. APS synthesis involves the formation of a high-energy phosphoric-sulfuric acid anhydride bond driven by GTP hydrolysis by CysN coupled to ATP hydrolysis by CysD. The protein is Sulfate adenylyltransferase subunit 1 of Escherichia coli O17:K52:H18 (strain UMN026 / ExPEC).